A 363-amino-acid chain; its full sequence is 3-dehydroquinate synthase (363 aa).

NAD(+) contacts are provided by residues 75–80 (DAEEGK), 109–113 (GAVTD), 133–134 (TS), lysine 146, lysine 155, and 173–176 (TLDT). Glutamate 188, histidine 251, and histidine 267 together coordinate Zn(2+).

This sequence belongs to the sugar phosphate cyclases superfamily. Dehydroquinate synthase family. Requires Co(2+) as cofactor. Zn(2+) is required as a cofactor. The cofactor is NAD(+).

The protein localises to the cytoplasm. It catalyses the reaction 7-phospho-2-dehydro-3-deoxy-D-arabino-heptonate = 3-dehydroquinate + phosphate. Its pathway is metabolic intermediate biosynthesis; chorismate biosynthesis; chorismate from D-erythrose 4-phosphate and phosphoenolpyruvate: step 2/7. Catalyzes the conversion of 3-deoxy-D-arabino-heptulosonate 7-phosphate (DAHP) to dehydroquinate (DHQ). This Pseudarthrobacter chlorophenolicus (strain ATCC 700700 / DSM 12829 / CIP 107037 / JCM 12360 / KCTC 9906 / NCIMB 13794 / A6) (Arthrobacter chlorophenolicus) protein is 3-dehydroquinate synthase.